We begin with the raw amino-acid sequence, 229 residues long: Putative N-acetylmannosamine-6-phosphate 2-epimerase (229 aa).

This sequence belongs to the NanE family.

The catalysed reaction is an N-acyl-D-glucosamine 6-phosphate = an N-acyl-D-mannosamine 6-phosphate. It participates in amino-sugar metabolism; N-acetylneuraminate degradation; D-fructose 6-phosphate from N-acetylneuraminate: step 3/5. Functionally, converts N-acetylmannosamine-6-phosphate (ManNAc-6-P) to N-acetylglucosamine-6-phosphate (GlcNAc-6-P). This chain is Putative N-acetylmannosamine-6-phosphate 2-epimerase, found in Shigella dysenteriae serotype 1 (strain Sd197).